The sequence spans 610 residues: POU domain, class 6, transcription factor 1 (610 aa).

The tract at residues 55-87 is disordered; that stretch reads SSAGAAESGGDEEGSGQSLEATEEAQLDGPVTT. The POU-specific domain occupies 448 to 522; it reads EEAINLEEIR…VLERWLAEAE (75 aa). A DNA-binding region (homeobox) is located at residues 543-602; that stretch reads KRKRRTSFTPQAIEVLNTYFEKNSLPTGQEITEIAKELNYDREVVRVWFCNRRQTLKNTS.

Belongs to the POU transcription factor family. Class-6 subfamily. As to expression, ubiquitously expressed during embryogenesis.

It is found in the nucleus. Transcription factor that binds with high affinity to the motif 5'-TAATGARAT-3'. In Danio rerio (Zebrafish), this protein is POU domain, class 6, transcription factor 1 (pou6f1).